We begin with the raw amino-acid sequence, 485 residues long: Anthranilate synthase component I-like protein (485 aa).

Residues Ser-69 and 271 to 273 (PFA) contribute to the L-tryptophan site. Residue 306–307 (GT) coordinates chorismate. A Mg(2+)-binding site is contributed by Glu-333. Residues Arg-441, 455 to 457 (GAG), and Gly-457 contribute to the chorismate site. Glu-470 contributes to the Mg(2+) binding site.

It belongs to the anthranilate synthase component I family. Tetramer of two components I and two components II. It depends on Mg(2+) as a cofactor.

It carries out the reaction chorismate + L-glutamine = anthranilate + pyruvate + L-glutamate + H(+). Its pathway is amino-acid biosynthesis; L-tryptophan biosynthesis; L-tryptophan from chorismate: step 1/5. The protein is Anthranilate synthase component I-like protein (trpE2) of Synechocystis sp. (strain ATCC 27184 / PCC 6803 / Kazusa).